The primary structure comprises 444 residues: Trigger factor (444 aa).

In terms of domain architecture, PPIase FKBP-type spans 165–250 (GDFAKFDFEG…LHEIQELKIP (86 aa)).

The protein belongs to the FKBP-type PPIase family. Tig subfamily.

The protein resides in the cytoplasm. It catalyses the reaction [protein]-peptidylproline (omega=180) = [protein]-peptidylproline (omega=0). Its function is as follows. Involved in protein export. Acts as a chaperone by maintaining the newly synthesized protein in an open conformation. Functions as a peptidyl-prolyl cis-trans isomerase. The sequence is that of Trigger factor from Campylobacter jejuni subsp. jejuni serotype O:23/36 (strain 81-176).